The following is a 202-amino-acid chain: Superoxide dismutase [Mn] (202 aa).

Residue His27 participates in Mn(2+) binding. Phosphothreonine is present on residues Thr34 and Thr70. Positions 82, 164, and 168 each coordinate Mn(2+).

This sequence belongs to the iron/manganese superoxide dismutase family. As to quaternary structure, homodimer. The cofactor is Mn(2+).

The catalysed reaction is 2 superoxide + 2 H(+) = H2O2 + O2. Its function is as follows. Destroys superoxide anion radicals which are normally produced within the cells and which are toxic to biological systems. In Halalkalibacterium halodurans (strain ATCC BAA-125 / DSM 18197 / FERM 7344 / JCM 9153 / C-125) (Bacillus halodurans), this protein is Superoxide dismutase [Mn] (sodA).